The following is a 299-amino-acid chain: Transcription termination/antitermination protein NusG (299 aa).

Positions 30–96 are disordered; that stretch reads DPDEAELADA…APVEPAEPVD (67 aa). 2 tandem repeats follow at residues 46-49 and 70-73. The tract at residues 46–87 is 4 X 4 AA repeats of E-E-A-A; it reads EEAALHVESDEDEDEADVEVDAAVEEAADDAEVAEEEAEEAA. The span at 54–87 shows a compositional bias: acidic residues; the sequence is SDEDEDEADVEVDAAVEEAADDAEVAEEEAEEAA. A 3; approximate repeat occupies 80–83; it reads EEEA. Repeat unit 4 spans residues 84 to 87; that stretch reads EEAA. One can recognise a KOW domain in the interval 248-276; sequence VGDSVTVTDGPFATLQATINEINPDSKKV.

Belongs to the NusG family. Post-translationally, the N-terminus is blocked.

In terms of biological role, participates in transcription elongation, termination and antitermination. This Streptomyces virginiae (Streptomyces cinnamonensis) protein is Transcription termination/antitermination protein NusG.